We begin with the raw amino-acid sequence, 565 residues long: Galactoside 2-alpha-L-fucosyltransferase (565 aa).

Residues Met-1–Arg-43 lie on the Cytoplasmic side of the membrane. Residues Val-44–Val-64 traverse the membrane as a helical; Signal-anchor for type II membrane protein segment. The Lumenal segment spans residues Leu-65–Asn-565. N-linked (GlcNAc...) asparagine glycans are attached at residues Asn-159, Asn-263, Asn-407, and Asn-509.

Belongs to the glycosyltransferase 37 family.

The protein localises to the golgi apparatus. It localises to the golgi stack membrane. It participates in protein modification; protein glycosylation. Its function is as follows. Involved in cell wall biosynthesis. Adds the terminal fucosyl residue on xyloglucan side chains. This chain is Galactoside 2-alpha-L-fucosyltransferase (FT1), found in Pisum sativum (Garden pea).